We begin with the raw amino-acid sequence, 84 residues long: MSSGGLLLLLGLLTLWAELTPVSGQDRPKFCHLPANPGPCRATITRFYYNSDSKQCEKFTYGGCHGNENNFETKDKCHYTCVGK.

Positions 1–24 (MSSGGLLLLLGLLTLWAELTPVSG) are cleaved as a signal peptide. Q25 carries the pyrrolidone carboxylic acid modification. Positions 31 to 81 (CHLPANPGPCRATITRFYYNSDSKQCEKFTYGGCHGNENNFETKDKCHYTC) constitute a BPTI/Kunitz inhibitor domain. Intrachain disulfides connect C31–C81, C40–C64, and C56–C77.

The protein resides in the secreted. Its function is as follows. Serine protease inhibitor. The polypeptide is Kunitz/BPTI-like toxin (Austrelaps superbus (Lowland copperhead snake)).